A 356-amino-acid chain; its full sequence is Tyrosine recombinase XerS (356 aa).

The Core-binding (CB) domain occupies 16-121 (IMPWYVLDYY…ALSSLYKYLT (106 aa)). Residues 169 to 354 (AFLDYVDKEY…VNDEQKNALD (186 aa)) form the Tyr recombinase domain. Residues Arg-210, Lys-234, His-306, Arg-309, and His-332 contribute to the active site. Catalysis depends on Tyr-341, which acts as the O-(3'-phospho-DNA)-tyrosine intermediate.

The protein belongs to the 'phage' integrase family. XerS subfamily.

It is found in the cytoplasm. FtsK is required for recombination. Site-specific tyrosine recombinase, which acts by catalyzing the cutting and rejoining of the recombining DNA molecules. Essential to convert dimers of the bacterial chromosome into monomers to permit their segregation at cell division. In Streptococcus pyogenes serotype M6 (strain ATCC BAA-946 / MGAS10394), this protein is Tyrosine recombinase XerS.